The chain runs to 355 residues: Probable aldo-keto reductase 3 (355 aa).

Residue Tyr70 is the Proton donor of the active site. Residue His138 coordinates substrate. 217–227 (SPLGRGFFSSG) contributes to the NADP(+) binding site.

Belongs to the aldo/keto reductase family.

This is Probable aldo-keto reductase 3 from Oryza sativa subsp. japonica (Rice).